A 71-amino-acid chain; its full sequence is Exodeoxyribonuclease 7 small subunit (71 aa).

The protein belongs to the XseB family. Heterooligomer composed of large and small subunits.

The protein resides in the cytoplasm. The catalysed reaction is Exonucleolytic cleavage in either 5'- to 3'- or 3'- to 5'-direction to yield nucleoside 5'-phosphates.. Its function is as follows. Bidirectionally degrades single-stranded DNA into large acid-insoluble oligonucleotides, which are then degraded further into small acid-soluble oligonucleotides. This chain is Exodeoxyribonuclease 7 small subunit, found in Streptococcus equi subsp. zooepidemicus (strain H70).